The following is a 161-amino-acid chain: UPF0262 protein Meso_0189 (161 aa).

Belongs to the UPF0262 family.

The protein is UPF0262 protein Meso_0189 of Chelativorans sp. (strain BNC1).